The chain runs to 492 residues: Bifunctional purine biosynthesis protein PurH (492 aa).

An MGS-like domain is found at 1-144 (MRKALLSVSD…KNFRHVITVV (144 aa)).

It belongs to the PurH family.

The enzyme catalyses (6R)-10-formyltetrahydrofolate + 5-amino-1-(5-phospho-beta-D-ribosyl)imidazole-4-carboxamide = 5-formamido-1-(5-phospho-D-ribosyl)imidazole-4-carboxamide + (6S)-5,6,7,8-tetrahydrofolate. It catalyses the reaction IMP + H2O = 5-formamido-1-(5-phospho-D-ribosyl)imidazole-4-carboxamide. Its pathway is purine metabolism; IMP biosynthesis via de novo pathway; 5-formamido-1-(5-phospho-D-ribosyl)imidazole-4-carboxamide from 5-amino-1-(5-phospho-D-ribosyl)imidazole-4-carboxamide (10-formyl THF route): step 1/1. It participates in purine metabolism; IMP biosynthesis via de novo pathway; IMP from 5-formamido-1-(5-phospho-D-ribosyl)imidazole-4-carboxamide: step 1/1. The polypeptide is Bifunctional purine biosynthesis protein PurH (Macrococcus caseolyticus (strain JCSC5402) (Macrococcoides caseolyticum)).